Reading from the N-terminus, the 115-residue chain is Large ribosomal subunit protein bL19 (115 aa).

The protein belongs to the bacterial ribosomal protein bL19 family.

This protein is located at the 30S-50S ribosomal subunit interface and may play a role in the structure and function of the aminoacyl-tRNA binding site. This Latilactobacillus sakei subsp. sakei (strain 23K) (Lactobacillus sakei subsp. sakei) protein is Large ribosomal subunit protein bL19.